The primary structure comprises 196 residues: MTIKIRSEETCTESKFFYHNQDVTYNYHLDMVDNGINIWTSIHGKNAGLLPFVFQSFQISSEEDAISFYKYVKLIGTGCYVAILISGNLPYHSKRITKAMKLVGGGSKSIETLSDSNPNFCLIGYKGQKIGSARQAIGDADIEEEGGISVWMMTTKNRCLFKNRILINLRNKTPLGTISQLYKKHIKKEMTNNIYL.

Residues 71–87 form a helical membrane-spanning segment; the sequence is YVKLIGTGCYVAILISG.

Its subcellular location is the membrane. This is an uncharacterized protein from Dictyostelium discoideum (Social amoeba).